Consider the following 416-residue polypeptide: Gamma-glutamyl phosphate reductase (416 aa).

It belongs to the gamma-glutamyl phosphate reductase family.

The protein resides in the cytoplasm. It catalyses the reaction L-glutamate 5-semialdehyde + phosphate + NADP(+) = L-glutamyl 5-phosphate + NADPH + H(+). The protein operates within amino-acid biosynthesis; L-proline biosynthesis; L-glutamate 5-semialdehyde from L-glutamate: step 2/2. In terms of biological role, catalyzes the NADPH-dependent reduction of L-glutamate 5-phosphate into L-glutamate 5-semialdehyde and phosphate. The product spontaneously undergoes cyclization to form 1-pyrroline-5-carboxylate. This Streptococcus mutans serotype c (strain ATCC 700610 / UA159) protein is Gamma-glutamyl phosphate reductase.